The chain runs to 360 residues: MLVWLAEYLVRYETAFNAISYITVRANLALLTALFISLWIGPKVIKRLQILKFGQEVRNDGPESHFAKKGTPTMGGVMILFSIGVSTLLWANLANPYIWVCLFVLFGYGAIGFVDDFRKITRKNTDGLIARWKYFWMSVVALVAILWLYWLGHDTDATRLVIPFFKDIMPQLGLFYIVLSYFVIVGTGNAVNLTDGLDGLAIMPTALVAGAFALIAWATGNVNFAEYLHIPYIKYSSEVVVFCTAIVGASLGFLWFNTYPAQVFMGDVGSLALGGALGVVAILVRQEFLLVIMGGVFVVEALSVILQVGSYKLRKQRIFRMAPIHHHFELKGWPEPRVIIRFWIISLMLVLMGLVTLKLR.

A run of 10 helical transmembrane segments spans residues 21 to 41 (YITVRANLALLTALFISLWIG), 73 to 93 (TMGGVMILFSIGVSTLLWANL), 94 to 114 (ANPYIWVCLFVLFGYGAIGFV), 132 to 152 (WKYFWMSVVALVAILWLYWLG), 168 to 188 (IMPQLGLFYIVLSYFVIVGTG), 199 to 219 (GLAIMPTALVAGAFALIAWAT), 239 to 259 (VVVFCTAIVGASLGFLWFNTY), 263 to 283 (VFMGDVGSLALGGALGVVAIL), 288 to 308 (FLLVIMGGVFVVEALSVILQV), and 338 to 358 (VIIRFWIISLMLVLMGLVTLK).

Belongs to the glycosyltransferase 4 family. MraY subfamily. Mg(2+) serves as cofactor.

It localises to the cell inner membrane. It catalyses the reaction UDP-N-acetyl-alpha-D-muramoyl-L-alanyl-gamma-D-glutamyl-meso-2,6-diaminopimeloyl-D-alanyl-D-alanine + di-trans,octa-cis-undecaprenyl phosphate = di-trans,octa-cis-undecaprenyl diphospho-N-acetyl-alpha-D-muramoyl-L-alanyl-D-glutamyl-meso-2,6-diaminopimeloyl-D-alanyl-D-alanine + UMP. Its pathway is cell wall biogenesis; peptidoglycan biosynthesis. Functionally, catalyzes the initial step of the lipid cycle reactions in the biosynthesis of the cell wall peptidoglycan: transfers peptidoglycan precursor phospho-MurNAc-pentapeptide from UDP-MurNAc-pentapeptide onto the lipid carrier undecaprenyl phosphate, yielding undecaprenyl-pyrophosphoryl-MurNAc-pentapeptide, known as lipid I. The chain is Phospho-N-acetylmuramoyl-pentapeptide-transferase from Haemophilus influenzae (strain ATCC 51907 / DSM 11121 / KW20 / Rd).